Here is a 676-residue protein sequence, read N- to C-terminus: Ribosome quality control complex subunit TCF25 (676 aa).

Disordered stretches follow at residues 1–59 (MSRR…VRVN) and 85–147 (LTDA…ENGL). Residues 123–136 (GKLRKKKKKQKNKK) show a composition bias toward basic residues. Phosphoserine is present on Ser-602.

Belongs to the TCF25 family. Component of the ribosome quality control complex (RQC), composed of the E3 ubiquitin ligase LTN1, TCF25 and NEMF associated with the 60S ribosomal subunit. Interacts (via C-terminus) with NFATC4; the interaction leads to suppresson of NFATC4 transcription factor activity and is reduced following stimulation with angiotensin-2. Interacts with XIAP. As to expression, in the embryo, widely expressed with highest levels in brain. In the adult, highest expression is found in the heart. Repressed in cardiac tissue of patients with heart failure (at protein level). mRNA levels in the heart are unchanged in patients with heart failure.

Its subcellular location is the nucleus. It localises to the cytoplasm. The protein localises to the cytosol. In terms of biological role, component of the ribosome quality control complex (RQC), a ribosome-associated complex that mediates ubiquitination and extraction of incompletely synthesized nascent chains for proteasomal degradation. In the RQC complex, required to promote formation of 'Lys-48'-linked polyubiquitin chains during ubiquitination of incompletely synthesized proteins by LTN1. May negatively regulate the calcineurin-NFAT signaling cascade by suppressing the activity of transcription factor NFATC4. May play a role in cell death control. This Homo sapiens (Human) protein is Ribosome quality control complex subunit TCF25.